A 212-amino-acid chain; its full sequence is Phosphoenolpyruvate guanylyltransferase (212 aa).

The phosphoenolpyruvate site is built by Thr-139, Gly-155, and Ser-158.

It belongs to the CofC family.

It carries out the reaction phosphoenolpyruvate + GTP + H(+) = enolpyruvoyl-2-diphospho-5'-guanosine + diphosphate. It functions in the pathway cofactor biosynthesis; coenzyme F420 biosynthesis. Its function is as follows. Guanylyltransferase that catalyzes the activation of phosphoenolpyruvate (PEP) as enolpyruvoyl-2-diphospho-5'-guanosine, via the condensation of PEP with GTP. It is involved in the biosynthesis of coenzyme F420, a hydride carrier cofactor. The polypeptide is Phosphoenolpyruvate guanylyltransferase (Streptomyces coelicolor (strain ATCC BAA-471 / A3(2) / M145)).